Here is a 181-residue protein sequence, read N- to C-terminus: ATP synthase subunit delta (181 aa).

It belongs to the ATPase delta chain family. As to quaternary structure, F-type ATPases have 2 components, F(1) - the catalytic core - and F(0) - the membrane proton channel. F(1) has five subunits: alpha(3), beta(3), gamma(1), delta(1), epsilon(1). F(0) has three main subunits: a(1), b(2) and c(10-14). The alpha and beta chains form an alternating ring which encloses part of the gamma chain. F(1) is attached to F(0) by a central stalk formed by the gamma and epsilon chains, while a peripheral stalk is formed by the delta and b chains.

The protein localises to the cell membrane. F(1)F(0) ATP synthase produces ATP from ADP in the presence of a proton or sodium gradient. F-type ATPases consist of two structural domains, F(1) containing the extramembraneous catalytic core and F(0) containing the membrane proton channel, linked together by a central stalk and a peripheral stalk. During catalysis, ATP synthesis in the catalytic domain of F(1) is coupled via a rotary mechanism of the central stalk subunits to proton translocation. Functionally, this protein is part of the stalk that links CF(0) to CF(1). It either transmits conformational changes from CF(0) to CF(1) or is implicated in proton conduction. The chain is ATP synthase subunit delta from Bacillus velezensis (strain DSM 23117 / BGSC 10A6 / LMG 26770 / FZB42) (Bacillus amyloliquefaciens subsp. plantarum).